Consider the following 115-residue polypeptide: Con-Ins G1a (115 aa).

A signal peptide spans 1 to 24 (MTTSSYFLLMALGLLLYVCQSSFG). Positions 25–29 (NQHTR) are excised as a propeptide. Position 34 is a 4-hydroxyproline; partial (Pro-34). Intrachain disulfides connect Cys-38/Cys-101, Cys-50/Cys-114, and Cys-100/Cys-105. Glu-41 carries the post-translational modification 4-carboxyglutamate. Residues 53 to 94 (KRNDAGEKRGRASPLWQRRGSLSKLKARAKRNGAFHLPRDGR) constitute a propeptide, c peptide. Glu-98 carries the 4-carboxyglutamate modification. A 4-hydroxyproline; partial modification is found at Pro-104. Residue Glu-109 is modified to 4-carboxyglutamate; partial. Cysteine amide is present on Cys-114.

This sequence belongs to the insulin family. As to quaternary structure, heterodimer of A and B chains; disulfide-linked. As to expression, expressed by the venom gland.

The protein localises to the secreted. Its function is as follows. This venom insulin, from a fish-hunting cone snail, facilitates prey capture by rapidly inducing hypoglycemic shock. It is one of the smallest known insulin found in nature and lacks the C-terminal segment of the B chain that, in human insulin, mediates engagement of the insulin receptor (INSR) and assembly of the hormone's hexameric storage form. Despite lacking this segment, it both binds and activates human insulin receptor (long isoform (HIR-B)) with a high potency (EC(50)=16.28 nM). In vivo, intraperitoneal injection of this peptide into zebrafish lowers blood glucose with the same potency than human insulin. In addition, when applied to water, this peptide reduces overall locomotor activity of zebrafish larvae, observed as a significant decrease in the percentage of time spent swimming and movement frequency. When tested on a mouse model of diabetes, this insulin also lowers blood glucose with a 10-fold lower potency than human insulin. In Conus geographus (Geography cone), this protein is Con-Ins G1a.